Consider the following 310-residue polypeptide: ADP-L-glycero-D-manno-heptose-6-epimerase (310 aa).

NADP(+)-binding positions include 10-11, 31-32, Lys38, Lys53, 75-79, and Asn92; these read FI, DN, and EGACS. Tyr140 functions as the Proton acceptor in the catalytic mechanism. Lys144 is a binding site for NADP(+). Residue Asn169 coordinates substrate. Val170 and Lys178 together coordinate NADP(+). Lys178 acts as the Proton acceptor in catalysis. Residues Ser180, His187, 201–204, Arg209, and Tyr272 each bind substrate; that span reads FSGS.

It belongs to the NAD(P)-dependent epimerase/dehydratase family. HldD subfamily. In terms of assembly, homopentamer. The cofactor is NADP(+).

It carries out the reaction ADP-D-glycero-beta-D-manno-heptose = ADP-L-glycero-beta-D-manno-heptose. It functions in the pathway nucleotide-sugar biosynthesis; ADP-L-glycero-beta-D-manno-heptose biosynthesis; ADP-L-glycero-beta-D-manno-heptose from D-glycero-beta-D-manno-heptose 7-phosphate: step 4/4. Catalyzes the interconversion between ADP-D-glycero-beta-D-manno-heptose and ADP-L-glycero-beta-D-manno-heptose via an epimerization at carbon 6 of the heptose. This Pectobacterium carotovorum subsp. carotovorum (strain PC1) protein is ADP-L-glycero-D-manno-heptose-6-epimerase.